We begin with the raw amino-acid sequence, 742 residues long: RING finger protein 145 homolog (742 aa).

11 helical membrane passes run 109 to 129, 138 to 158, 178 to 198, 233 to 253, 285 to 305, 318 to 338, 368 to 388, 395 to 415, 438 to 458, 463 to 483, and 533 to 553; these read AAII…TLPL, HFLS…YVDL, HGFH…LLEV, ACTG…PSLI, ILEL…YVEL, ILLT…ALAV, SGYT…FLGM, ILLA…LFEI, ICIA…MLAL, IYTA…IGVI, and VKVG…IVNI. The RING-type; atypical zinc finger occupies 592–630; the sequence is CAICFIEMKEEARITPCKHYFHGPCLRKWLAVKMVCPLC. Disordered regions lie at residues 642–684 and 722–742; these read KSSS…PGDM and AYES…ENNN. Positions 659 to 672 are enriched in acidic residues; sequence AAVEENPENPEEQP.

Its subcellular location is the membrane. It is found in the golgi apparatus. The protein localises to the cis-Golgi network. It localises to the trans-Golgi network. It catalyses the reaction S-ubiquitinyl-[E2 ubiquitin-conjugating enzyme]-L-cysteine + [acceptor protein]-L-lysine = [E2 ubiquitin-conjugating enzyme]-L-cysteine + N(6)-ubiquitinyl-[acceptor protein]-L-lysine.. In terms of biological role, E3 ubiquitin ligase that catalyzes the direct transfer of ubiquitin from E2 ubiquitin-conjugating enzyme to a specific substrate. Acting downstream of probable Golgi transport protein eas-1, involved in inhibition of activation of transcription factor sbp-1, thereby playing a role in regulating AMsh glial cell size. The chain is RING finger protein 145 homolog from Caenorhabditis elegans.